A 250-amino-acid chain; its full sequence is Histone H1.3 (250 aa).

Disordered regions lie at residues 17 to 53 (AASGEKKVSTKKAAATPKSKKSTAAPPSHPPTQQMVD) and 104 to 250 (QTKG…ATKK). A compositionally biased stretch (low complexity) spans 27-42 (KKAAATPKSKKSTAAP). The H15 domain maps to 44-118 (SHPPTQQMVD…GASGSFKLSR (75 aa)). Positions 120 to 133 (AKKDAKPKASAVEK) are enriched in basic and acidic residues. Over residues 138 to 161 (VNASAAAATKRSSSTSTTKKAAGA) the composition is skewed to low complexity. The segment covering 174–191 (KNVEKKKADKEKAKDAKK) has biased composition (basic and acidic residues). Low complexity predominate over residues 192–234 (TGTIKAKLTTAKAKSSATKPKTPKPKTTSAKPKKVVSATTPKK). A compositionally biased stretch (basic residues) spans 235 to 250 (TAVKKPKAKTASATKK).

This sequence belongs to the histone H1/H5 family.

The protein resides in the nucleus. It is found in the chromosome. In terms of biological role, histones H1 are necessary for the condensation of nucleosome chains into higher-order structures. In Drosophila virilis (Fruit fly), this protein is Histone H1.3 (His1.3).